The sequence spans 628 residues: 1-deoxy-D-xylulose-5-phosphate synthase (628 aa).

Thiamine diphosphate contacts are provided by residues His-80 and Gly-121–Ser-123. Asp-152 serves as a coordination point for Mg(2+). Residues Gly-153–Gly-154, Asn-181, Tyr-289, and Glu-370 contribute to the thiamine diphosphate site. A Mg(2+)-binding site is contributed by Asn-181.

The protein belongs to the transketolase family. DXPS subfamily. As to quaternary structure, homodimer. The cofactor is Mg(2+). It depends on thiamine diphosphate as a cofactor.

It carries out the reaction D-glyceraldehyde 3-phosphate + pyruvate + H(+) = 1-deoxy-D-xylulose 5-phosphate + CO2. Its pathway is metabolic intermediate biosynthesis; 1-deoxy-D-xylulose 5-phosphate biosynthesis; 1-deoxy-D-xylulose 5-phosphate from D-glyceraldehyde 3-phosphate and pyruvate: step 1/1. In terms of biological role, catalyzes the acyloin condensation reaction between C atoms 2 and 3 of pyruvate and glyceraldehyde 3-phosphate to yield 1-deoxy-D-xylulose-5-phosphate (DXP). The chain is 1-deoxy-D-xylulose-5-phosphate synthase from Alkalilimnicola ehrlichii (strain ATCC BAA-1101 / DSM 17681 / MLHE-1).